We begin with the raw amino-acid sequence, 275 residues long: 2,3,4,5-tetrahydropyridine-2,6-dicarboxylate N-succinyltransferase (275 aa).

This sequence belongs to the transferase hexapeptide repeat family.

The protein resides in the cytoplasm. The catalysed reaction is (S)-2,3,4,5-tetrahydrodipicolinate + succinyl-CoA + H2O = (S)-2-succinylamino-6-oxoheptanedioate + CoA. Its pathway is amino-acid biosynthesis; L-lysine biosynthesis via DAP pathway; LL-2,6-diaminopimelate from (S)-tetrahydrodipicolinate (succinylase route): step 1/3. In Paraburkholderia phymatum (strain DSM 17167 / CIP 108236 / LMG 21445 / STM815) (Burkholderia phymatum), this protein is 2,3,4,5-tetrahydropyridine-2,6-dicarboxylate N-succinyltransferase.